The primary structure comprises 132 residues: Small ribosomal subunit protein uS8 (132 aa).

The protein belongs to the universal ribosomal protein uS8 family. As to quaternary structure, part of the 30S ribosomal subunit. Contacts proteins S5 and S12.

In terms of biological role, one of the primary rRNA binding proteins, it binds directly to 16S rRNA central domain where it helps coordinate assembly of the platform of the 30S subunit. This Enterococcus faecalis (strain ATCC 700802 / V583) protein is Small ribosomal subunit protein uS8.